Consider the following 266-residue polypeptide: UPF0294 protein YafD (266 aa).

Belongs to the UPF0294 family.

Its subcellular location is the cytoplasm. The sequence is that of UPF0294 protein YafD from Salmonella paratyphi C (strain RKS4594).